A 180-amino-acid polypeptide reads, in one-letter code: Ribulose bisphosphate carboxylase small subunit, chloroplastic 4 (180 aa).

The N-terminal 56 residues, 1–56 (MASSIVSSAAVATRANGAQASMVGPFTGLKSTASFPVSRKQNLDITSIASNGGRVR), are a transit peptide targeting the chloroplast.

The protein belongs to the RuBisCO small chain family. As to quaternary structure, heterohexadecamer of 8 large and 8 small subunits.

The protein resides in the plastid. It is found in the chloroplast. Its function is as follows. RuBisCO catalyzes two reactions: the carboxylation of D-ribulose 1,5-bisphosphate, the primary event in carbon dioxide fixation, as well as the oxidative fragmentation of the pentose substrate. Both reactions occur simultaneously and in competition at the same active site. Although the small subunit is not catalytic it is essential for maximal activity. This is Ribulose bisphosphate carboxylase small subunit, chloroplastic 4 from Solanum tuberosum (Potato).